Reading from the N-terminus, the 251-residue chain is MPDPRDDDEAATAMPERAFFGRRKGHKLRSHQADLIAELLPRLSFDLGAPAPARLETLFASGIAEVRLEIGFGGGEHLIAEALAHPTTGFIGCEPYVNGMAKILAQIEARELGNIRLFAGDAAELLAWAPPASLARVDLIHPDPWPKRRHWKRRFVQDTSVAAMARVLHEDGEFRFVSDIDDYCAWTLAHLLRSKEFCWTAERACDWQLPFAGYTMTRYGRKAEREGRRAAYLHFRRAAAAPNDRAKAGEL.

Positions 69, 94, 121, and 143 each coordinate S-adenosyl-L-methionine. Asp-143 is an active-site residue. The substrate site is built by Lys-147 and Asp-179.

The protein belongs to the class I-like SAM-binding methyltransferase superfamily. TrmB family.

The enzyme catalyses guanosine(46) in tRNA + S-adenosyl-L-methionine = N(7)-methylguanosine(46) in tRNA + S-adenosyl-L-homocysteine. It functions in the pathway tRNA modification; N(7)-methylguanine-tRNA biosynthesis. Catalyzes the formation of N(7)-methylguanine at position 46 (m7G46) in tRNA. This Rhodopseudomonas palustris (strain BisB18) protein is tRNA (guanine-N(7)-)-methyltransferase.